Here is a 663-residue protein sequence, read N- to C-terminus: Protein KINESIN LIGHT CHAIN-RELATED 2 (663 aa).

Residues 1–14 (MDVGESNERVKDDS) are compositionally biased toward basic and acidic residues. Disordered stretches follow at residues 1 to 24 (MDVG…RSPL) and 86 to 146 (GESK…KVSV). S19 carries the phosphoserine modification. Residues 86–100 (GESKKEIILEKKEES) are compositionally biased toward basic and acidic residues. The span at 102–111 (GEGSLSQKKP) shows a compositional bias: polar residues. TPR repeat units lie at residues 147–181 (DEES…ALRA), 200–233 (VMSL…PMIE), 243–276 (FAGC…QRQV), 285–318 (GETC…HKEN), 329–363 (AADR…SSQN), 369–402 (AAVD…FKQG), 411–444 (ALVY…YLKP), 454–487 (ATGF…YANA), 495–528 (AGIE…FRNS), 537–570 (GIAL…LEKE), and 579–612 (LAVY…REEK).

Belongs to the kinesin light chain family.

This is Protein KINESIN LIGHT CHAIN-RELATED 2 from Arabidopsis thaliana (Mouse-ear cress).